The sequence spans 496 residues: Glycerol kinase (496 aa).

T14 is an ADP binding site. 2 residues coordinate ATP: T14 and T15. T14 lines the sn-glycerol 3-phosphate pocket. 4 residues coordinate sn-glycerol 3-phosphate: R84, E85, Y136, and D246. Glycerol is bound by residues R84, E85, Y136, D246, and Q247. Positions 268 and 313 each coordinate ADP. Residues T268, G313, Q317, and G414 each coordinate ATP. ADP is bound by residues G414 and N418.

It belongs to the FGGY kinase family.

It carries out the reaction glycerol + ATP = sn-glycerol 3-phosphate + ADP + H(+). The protein operates within polyol metabolism; glycerol degradation via glycerol kinase pathway; sn-glycerol 3-phosphate from glycerol: step 1/1. Inhibited by fructose 1,6-bisphosphate (FBP). Key enzyme in the regulation of glycerol uptake and metabolism. Catalyzes the phosphorylation of glycerol to yield sn-glycerol 3-phosphate. The protein is Glycerol kinase of Myxococcus xanthus (strain DK1622).